Consider the following 409-residue polypeptide: Sex-determination protein fem-3 (409 aa).

Component of a complex containing fem-1, fem-2 and fem-3. Interacts with fem-1 and fem-2 (via N-terminus). Part of a E3 ubiquitin-protein ligase complex, at least composed of cul-2, elc-1, tra-1, fem-1, fem-2 and fem-3; mediates the ubiquitination and subsequent proteasomal degradation of tra-1. Interacts with sel-10. Interacts with tra-2.

Functionally, required for male development. In XO (male) animals, fem-3 directs male differentiation in all tissues. In XX (hermaphrodite animals), it specifies the first 80 or so germ cells to be sperm. Negatively regulates male development when bound to tra-2. The polypeptide is Sex-determination protein fem-3 (Caenorhabditis briggsae).